The sequence spans 195 residues: Guanylate kinase (195 aa).

One can recognise a Guanylate kinase-like domain in the interval 7 to 186 (GVLLVLSSPS…SVEEISSILD (180 aa)). 14 to 21 (SPSGAGKT) contacts ATP.

Belongs to the guanylate kinase family.

The protein localises to the cytoplasm. It carries out the reaction GMP + ATP = GDP + ADP. Its function is as follows. Essential for recycling GMP and indirectly, cGMP. The chain is Guanylate kinase from Wolbachia sp. subsp. Brugia malayi (strain TRS).